The chain runs to 642 residues: Threonine--tRNA ligase (642 aa).

Residues Met1–Thr61 form the TGS domain. The interval Asp243 to Pro534 is catalytic. Lys286 carries the N6-acetyllysine modification. Cys334, His385, and His511 together coordinate Zn(2+).

It belongs to the class-II aminoacyl-tRNA synthetase family. As to quaternary structure, homodimer. Requires Zn(2+) as cofactor.

It is found in the cytoplasm. The enzyme catalyses tRNA(Thr) + L-threonine + ATP = L-threonyl-tRNA(Thr) + AMP + diphosphate + H(+). Functionally, catalyzes the attachment of threonine to tRNA(Thr) in a two-step reaction: L-threonine is first activated by ATP to form Thr-AMP and then transferred to the acceptor end of tRNA(Thr). Also edits incorrectly charged L-seryl-tRNA(Thr). This chain is Threonine--tRNA ligase, found in Escherichia coli O157:H7.